Reading from the N-terminus, the 104-residue chain is Inner membrane protein YjeO (104 aa).

Residues 1–5 (MSARM) are Cytoplasmic-facing. A helical membrane pass occupies residues 6 to 26 (FVLCCIWFIVAFLWITITSAL). The Periplasmic portion of the chain corresponds to 27-52 (DKEWMIDGRGINNVCDVLMYLEEDDT). The helical transmembrane segment at 53 to 73 (RDVGVIMTLPLFFPFLWFALW) threads the bilayer. Over 74–77 (RKKR) the chain is Cytoplasmic. The chain crosses the membrane as a helical span at residues 78–98 (GWFMYATALAIFGYWLWQFFL). The Periplasmic portion of the chain corresponds to 99-104 (RYQFCL).

The protein localises to the cell inner membrane. The protein is Inner membrane protein YjeO (yjeO) of Escherichia coli (strain K12).